A 1448-amino-acid chain; its full sequence is Probable serine/threonine-protein kinase irlB (1448 aa).

A compositionally biased stretch (acidic residues) spans 412–423; that stretch reads DDDDYDDYDDDD. Residues 412–446 form a disordered region; the sequence is DDDDYDDYDDDDDHHSGCNNNNNNNNDGDHNEDEN. The segment covering 428–437 has biased composition (low complexity); sequence GCNNNNNNNN. Coiled-coil stretches lie at residues 666–817, 887–921, and 974–1016; these read AESE…EIQN, EIQL…SNMK, and ENNK…QDED. The tract at residues 975-1008 is disordered; sequence NNKKQNLINDNNNNNNNNNNNNNNNNNNNNNNKL. A compositionally biased stretch (low complexity) spans 978–1008; it reads KQNLINDNNNNNNNNNNNNNNNNNNNNNNKL. Residues 1027-1293 enclose the Protein kinase domain; the sequence is RNESNILGRG…IQNVLNHPLF (267 aa). ATP contacts are provided by residues 1033–1041 and lysine 1056; that span reads LGRGSNGTL. Aspartate 1151 functions as the Proton acceptor in the catalytic mechanism. Positions 1296–1448 constitute a KEN domain; sequence LEKKIQFIDA…TIDYLFNFYN (153 aa).

The protein belongs to the protein kinase superfamily. Ser/Thr protein kinase family.

The enzyme catalyses L-seryl-[protein] + ATP = O-phospho-L-seryl-[protein] + ADP + H(+). It carries out the reaction L-threonyl-[protein] + ATP = O-phospho-L-threonyl-[protein] + ADP + H(+). The polypeptide is Probable serine/threonine-protein kinase irlB (irlB-1) (Dictyostelium discoideum (Social amoeba)).